Consider the following 74-residue polypeptide: UPF0154 protein LVIS_1358 (74 aa).

Residues 4–24 (WIWILIVIVVGLACAAGGFYG) form a helical membrane-spanning segment.

The protein belongs to the UPF0154 family.

It localises to the cell membrane. The polypeptide is UPF0154 protein LVIS_1358 (Levilactobacillus brevis (strain ATCC 367 / BCRC 12310 / CIP 105137 / JCM 1170 / LMG 11437 / NCIMB 947 / NCTC 947) (Lactobacillus brevis)).